The following is a 211-amino-acid chain: Cytochrome c biogenesis ATP-binding export protein CcmA (211 aa).

Residues 1 to 211 (MAIHNLACVR…RMAEATSCFG (211 aa)) form the ABC transporter domain. ATP is bound at residue 33-40 (GSNGAGKT).

Belongs to the ABC transporter superfamily. CcmA exporter (TC 3.A.1.107) family. The complex is composed of two ATP-binding proteins (CcmA) and two transmembrane proteins (CcmB).

Its subcellular location is the cell inner membrane. It carries out the reaction heme b(in) + ATP + H2O = heme b(out) + ADP + phosphate + H(+). Part of the ABC transporter complex CcmAB involved in the biogenesis of c-type cytochromes; once thought to export heme, this seems not to be the case, but its exact role is uncertain. Responsible for energy coupling to the transport system. This chain is Cytochrome c biogenesis ATP-binding export protein CcmA, found in Sodalis glossinidius (strain morsitans).